The primary structure comprises 495 residues: UDP-glycosyltransferase 71B7 (495 aa).

UDP-alpha-D-glucose is bound by residues serine 284, 351 to 353, 368 to 376, and 390 to 393; these read APQ, HCGWNSTLE, and YAEQ.

Belongs to the UDP-glycosyltransferase family.

The sequence is that of UDP-glycosyltransferase 71B7 (UGT71B7) from Arabidopsis thaliana (Mouse-ear cress).